The chain runs to 441 residues: Maltose-6'-phosphate glucosidase (441 aa).

Phe-4–Asn-70 provides a ligand contact to NAD(+). Residues Arg-93 and Asn-147 each contribute to the substrate site. Cys-169 contributes to the Mn(2+) binding site. The active-site Proton donor is Asp-170. Mn(2+) is bound at residue His-200. Tyr-264 acts as the Proton acceptor in catalysis. Arg-284 is a binding site for substrate.

This sequence belongs to the glycosyl hydrolase 4 family. Homotetramer. Requires NAD(+) as cofactor. The cofactor is Mn(2+). Fe(2+) serves as cofactor. Co(2+) is required as a cofactor. It depends on Ni(2+) as a cofactor.

The catalysed reaction is alpha-maltose 6'-phosphate + H2O = D-glucose 6-phosphate + D-glucose. The protein operates within glycan degradation; maltose degradation. Hydrolyzes a wide variety of 6-phospho-alpha-D-glucosides including maltose-6'P, trehalose-6P and the 6'-phosphorylated derivatives of the five linkage-isomeric alpha-D-glucosyl-D-fructoses: trehalulose-6'P, turanose-6'P, maltulose-6'P, leucrose-6'P, and palatinose-6'P. However, sucrose-6P is not a substrate for MalH, and this enzyme also fails to hydrolyze beta-O-linked phosphorylated disaccharides such as cellobiose-6'P and gentobiose-6'P. The sequence is that of Maltose-6'-phosphate glucosidase (malH) from Fusobacterium mortiferum.